The chain runs to 400 residues: Snake venom metalloproteinase H3 (400 aa).

A signal peptide spans 1-6; the sequence is FPYQGS. Residues 7–176 constitute a propeptide that is removed on maturation; it reads SIILESGNVN…KKASQLIVST (170 aa). Positions 180-377 constitute a Peptidase M12B domain; that stretch reads KYMEIVIVVD…ENPPCILNKP (198 aa). Residues Glu183 and Asp267 each contribute to the Ca(2+) site. 3 disulfide bridges follow: Cys291/Cys372, Cys331/Cys356, and Cys333/Cys339. Residue His316 coordinates Zn(2+). Glu317 is a catalytic residue. Residues His320 and His326 each coordinate Zn(2+). Ca(2+)-binding residues include Cys372, Asn375, Val387, Asn390, Leu392, Glu394, and Asp400. Residues 378–400 constitute a propeptide that is removed on maturation; that stretch reads LRTDTVSTPVSGNELLEAGKDYD.

This sequence belongs to the venom metalloproteinase (M12B) family. P-I subfamily. In terms of assembly, monomer. Zn(2+) serves as cofactor. Expressed by the venom gland.

It is found in the secreted. Snake venom metalloproteinase that impairs hemostasis in the envenomed animal. The sequence is that of Snake venom metalloproteinase H3 from Deinagkistrodon acutus (Hundred-pace snake).